The primary structure comprises 137 residues: uncharacterized protein (137 aa).

Residues 1-26 (MKDKMWCEDTAQPHRRLPAPPSSSSP) are disordered.

This is an uncharacterized protein from Homo sapiens (Human).